Reading from the N-terminus, the 310-residue chain is Ribosomal protein L11 methyltransferase (310 aa).

4 residues coordinate S-adenosyl-L-methionine: threonine 153, glycine 174, aspartate 196, and asparagine 239.

This sequence belongs to the methyltransferase superfamily. PrmA family.

It is found in the cytoplasm. The catalysed reaction is L-lysyl-[protein] + 3 S-adenosyl-L-methionine = N(6),N(6),N(6)-trimethyl-L-lysyl-[protein] + 3 S-adenosyl-L-homocysteine + 3 H(+). In terms of biological role, methylates ribosomal protein L11. This Janthinobacterium sp. (strain Marseille) (Minibacterium massiliensis) protein is Ribosomal protein L11 methyltransferase.